The following is a 569-amino-acid chain: Urease subunit alpha (569 aa).

The Urease domain maps to 131 to 569 (GAIDSHIHFI…LPLAQRYLLL (439 aa)). Ni(2+)-binding residues include His-136, His-138, and Lys-219. Lys-219 carries the post-translational modification N6-carboxylysine. His-221 lines the substrate pocket. Ni(2+) is bound by residues His-248 and His-274. His-322 functions as the Proton donor in the catalytic mechanism. Asp-362 provides a ligand contact to Ni(2+).

Belongs to the metallo-dependent hydrolases superfamily. Urease alpha subunit family. Heterotrimer of UreA (gamma), UreB (beta) and UreC (alpha) subunits. Three heterotrimers associate to form the active enzyme. Ni cation is required as a cofactor. Post-translationally, carboxylation allows a single lysine to coordinate two nickel ions.

The protein localises to the cytoplasm. The catalysed reaction is urea + 2 H2O + H(+) = hydrogencarbonate + 2 NH4(+). It participates in nitrogen metabolism; urea degradation; CO(2) and NH(3) from urea (urease route): step 1/1. The polypeptide is Urease subunit alpha (Prochlorococcus marinus (strain NATL2A)).